Here is an 887-residue protein sequence, read N- to C-terminus: ABC transporter A family member 10 (887 aa).

7 helical membrane passes run G38–L58, Y198–T218, I245–Y265, V277–L297, A309–L329, S335–Y355, and I376–T396. Low complexity predominate over residues N443–S469. Positions N443–D474 are disordered. The ABC transporter domain occupies I481–V728. Residue G519–T526 coordinates ATP. Positions N774–S797 are enriched in low complexity. Positions N774–D799 are disordered.

It belongs to the ABC transporter superfamily. ABCA family.

The protein localises to the membrane. The chain is ABC transporter A family member 10 (abcA10) from Dictyostelium discoideum (Social amoeba).